Reading from the N-terminus, the 153-residue chain is Protein ElaA (153 aa).

The N-acetyltransferase domain maps to 7 to 151 (LHHSELSVSQ…PHIGMAREVI (145 aa)).

This sequence belongs to the UPF0039 (ElaA) family.

The polypeptide is Protein ElaA (elaA) (Escherichia coli (strain K12)).